We begin with the raw amino-acid sequence, 112 residues long: Large ribosomal subunit protein uL22 (112 aa).

Belongs to the universal ribosomal protein uL22 family. Part of the 50S ribosomal subunit.

Its function is as follows. This protein binds specifically to 23S rRNA; its binding is stimulated by other ribosomal proteins, e.g. L4, L17, and L20. It is important during the early stages of 50S assembly. It makes multiple contacts with different domains of the 23S rRNA in the assembled 50S subunit and ribosome. In terms of biological role, the globular domain of the protein is located near the polypeptide exit tunnel on the outside of the subunit, while an extended beta-hairpin is found that lines the wall of the exit tunnel in the center of the 70S ribosome. The chain is Large ribosomal subunit protein uL22 from Nitratidesulfovibrio vulgaris (strain DSM 19637 / Miyazaki F) (Desulfovibrio vulgaris).